We begin with the raw amino-acid sequence, 143 residues long: Ribosome maturation factor RimP (143 aa).

The protein belongs to the RimP family.

The protein resides in the cytoplasm. In terms of biological role, required for maturation of 30S ribosomal subunits. This chain is Ribosome maturation factor RimP, found in Borrelia turicatae (strain 91E135).